The chain runs to 360 residues: Ethanolamine-phosphate cytidylyltransferase (360 aa).

Residues 207 to 208 (GF), 215 to 218 (HTEA), Lys-243, 291 to 294 (HGDD), and 321 to 325 (HTEGL) contribute to the CTP site.

It belongs to the cytidylyltransferase family.

It carries out the reaction phosphoethanolamine + CTP + H(+) = CDP-ethanolamine + diphosphate. Its pathway is phospholipid metabolism; phosphatidylethanolamine biosynthesis; phosphatidylethanolamine from ethanolamine: step 2/3. Its function is as follows. Ethanolamine-phosphate cytidylyltransferase that catalyzes the second step in the synthesis of phosphatidylethanolamine (PE) from ethanolamine via the CDP-ethanolamine pathway. The polypeptide is Ethanolamine-phosphate cytidylyltransferase (pctA) (Dictyostelium discoideum (Social amoeba)).